The sequence spans 626 residues: Glyco-Gag protein (626 aa).

The Cytoplasmic portion of the chain corresponds to 1-66; sequence LGDVPGTSGA…SVWNRSRAAR (66 aa). The chain crosses the membrane as a helical span at residues 67 to 86; sequence LVCCSIVLCCLCLTVFLYLS. Topologically, residues 87–626 are extracellular; it reads ENMGQAVTTP…PQASLLTLDD (540 aa). N-linked (GlcNAc...) asparagine; by host glycosylation occurs at Asn-113. Composition is skewed to pro residues over residues 198–212 and 249–261; these read PPSA…PLST and DPPP…PPSP. 2 disordered regions span residues 198–306 and 522–626; these read PPSA…FPLR and RETP…TLDD. Basic and acidic residues-rich tracts occupy residues 522 to 554 and 574 to 607; these read RETP…EKER and RQDR…DCPK. The stretch at 526 to 566 forms a coiled coil; sequence EEREERIRRETEEKEERRRAEDVQREKERDRRRHREMSKLL. A CCHC-type zinc finger spans residues 590 to 607; it reads DQCAYCKEKGHWARDCPK.

In terms of processing, glycosylated by host. Post-translationally, cleaved by host near the middle of the molecule, releasing the c-terminal half containing capsid and nucleoprotein domains op GAG.

The protein localises to the host cell membrane. In terms of biological role, plays a role in viral particle release. Presumably acts by facilitating the fission of the virion bud at the cell surface. May prevent the antiviral activity of murine APOBEC3. The polypeptide is Glyco-Gag protein (Mus musculus (Mouse)).